Reading from the N-terminus, the 412-residue chain is MAENLKGCSVCCKSSWNQLQDLCRLAKLSCPALGVSKKNLYDFEVEYLCDYKKIREQEYYLVKWRGYPDSENTWEPRQNLKCIRVLKQFHKDLERELVRRHRRSKPPRHLDPNLANYLVQKAKQRRALQRWEQELNAKRSHLGRITVENEVDLDGPPRSFVYINEYRVGEGITLNQVAVGCECQDCLLAPTGGCCPGASLHKFAYNDQGQVRLKAGQPIYECNSRCCCGYDCPNRVVQKGIRYDLCIFRTNDGRGWGVRTLEKIRKNSFVMEYVGEIITSEEAERRGQIYDRQGATYLFDLDYVEDVYTVDAAYYGNISHFVNHSCDPNLQVYNVFIDNLDERLPRIAFFATRTIWAGEELTFDYNMQVDPVDMESTRMDSNFGLAGLPGSPKKRVRIECKCGTTACRKYLF.

The interval 1–89 (MAENLKGCSV…LKCIRVLKQF (89 aa)) is interaction with SIRT1. The Chromo domain occupies 43–101 (FEVEYLCDYKKIREQEYYLVKWRGYPDSENTWEPRQNLKCIRVLKQFHKDLERELVRRH). The Pre-SET domain maps to 179 to 240 (VGCECQDCLL…DCPNRVVQKG (62 aa)). Zn(2+)-binding residues include C181, C183, C186, C194, C195, C222, C226, C228, and C232. The 124-residue stretch at 243 to 366 (YDLCIFRTND…AGEELTFDYN (124 aa)) folds into the SET domain. 254 to 256 (RGW) lines the S-adenosyl-L-methionine pocket. The interval 255–377 (GWGVRTLEKI…QVDPVDMEST (123 aa)) is mediates interaction with MECOM. An N6-acetyllysine modification is found at K266. S-adenosyl-L-methionine is bound by residues Y297 and 323-324 (NH). C326 provides a ligand contact to Zn(2+). S391 is subject to Phosphoserine. The Post-SET domain maps to 396-412 (VRIECKCGTTACRKYLF). The Zn(2+) site is built by C400, C402, and C407.

Belongs to the class V-like SAM-binding methyltransferase superfamily. Histone-lysine methyltransferase family. Suvar3-9 subfamily. Interacts with CCAR2 and GFI1B. Component of the eNoSC complex, composed of SIRT1, SUV39H1 and RRP8. Interacts with H3 and H4 histones. Interacts with DNMT3B, CBX1, CBX4, MBD1, RUNX1, RUNX3, MYOD1, SMAD5 and RB1. Interacts with SBF1 through the SET domain. Interacts with HDAC1 and HDAC2 through the N-terminus and associates with the core histone deacetylase complex composed of HDAC1, HDAC2, RBBP4 and RBBP7. Interacts (via SET domain) with MECOM; enhances MECOM transcriptional repression activity. Interacts with LMNA; the interaction increases stability of SUV39H1. The large PER complex involved in the histone methylation is composed of at least PER2, CBX3, TRIM28, SUV39H1 and/or SUV39H2; CBX3 mediates the formation of the complex. In terms of processing, phosphorylated on serine residues, and to a lesser degree, on threonine residues. Post-translationally, acetylated at Lys-266, leading to inhibition of enzyme activity. SIRT1-mediated deacetylation relieves this inhibition. Ubiquitinated by the DCX(DCAF13) E3 ubiquitin ligase complex, leading to its degradation. In terms of tissue distribution, widely expressed.

It localises to the nucleus. It is found in the nucleus lamina. Its subcellular location is the nucleoplasm. The protein resides in the chromosome. The protein localises to the centromere. The catalysed reaction is L-lysyl(9)-[histone H3] + 3 S-adenosyl-L-methionine = N(6),N(6),N(6)-trimethyl-L-lysyl(9)-[histone H3] + 3 S-adenosyl-L-homocysteine + 3 H(+). Its activity is regulated as follows. Negatively regulated by CCAR2. Histone methyltransferase that specifically trimethylates 'Lys-9' of histone H3 using monomethylated H3 'Lys-9' as substrate. H3 'Lys-9' trimethylation represents a specific tag for epigenetic transcriptional repression by recruiting HP1 (CBX1, CBX3 and/or CBX5) proteins to methylated histones. Mainly functions in heterochromatin regions, thereby playing a central role in the establishment of constitutive heterochromatin at pericentric and telomere regions. H3 'Lys-9' trimethylation is also required to direct DNA methylation at pericentric repeats. SUV39H1 is targeted to histone H3 via its interaction with RB1 and is involved in many processes, such as repression of MYOD1-stimulated differentiation, regulation of the control switch for exiting the cell cycle and entering differentiation, repression by the PML-RARA fusion protein, BMP-induced repression, repression of switch recombination to IgA and regulation of telomere length. Component of the eNoSC (energy-dependent nucleolar silencing) complex, a complex that mediates silencing of rDNA in response to intracellular energy status and acts by recruiting histone-modifying enzymes. The eNoSC complex is able to sense the energy status of cell: upon glucose starvation, elevation of NAD(+)/NADP(+) ratio activates SIRT1, leading to histone H3 deacetylation followed by dimethylation of H3 at 'Lys-9' (H3K9me2) by SUV39H1 and the formation of silent chromatin in the rDNA locus. Recruited by the PER complex to the E-box elements of the circadian target genes such as PER2 itself or PER1, contributes to the conversion of local chromatin to a heterochromatin-like repressive state through H3 'Lys-9' trimethylation. The sequence is that of Histone-lysine N-methyltransferase SUV39H1 (Suv39h1) from Mus musculus (Mouse).